The following is a 959-amino-acid chain: Ataxin-2 homolog (959 aa).

In terms of domain architecture, Sm spans 13–92; that stretch reads DVLSAINDMI…IVDFAYVTQE (80 aa). Disordered stretches follow at residues 203–378, 392–484, 501–528, 697–831, and 867–959; these read AREI…GSRV, TAPK…SVIT, PRVA…HPAM, PPQG…QHIQ, and PMQQ…QSPP. Residues 226–235 are compositionally biased toward basic and acidic residues; sequence DLDKITRQED. Residues 246 to 260 show a composition bias toward low complexity; it reads NNSFNQQQQQRRNPN. The span at 270-281 shows a compositional bias: basic and acidic residues; the sequence is RRAEGLRGDRRN. Low complexity predominate over residues 282–313; it reads SGSSSANNSRYGAPAAAQQNYSQNQQQQQGQK. Composition is skewed to polar residues over residues 341 to 356 and 473 to 484; these read RQQQ…NNNV and VSVTSENDSVIT. 3 stretches are compositionally biased toward low complexity: residues 504–528, 697–707, and 715–725; these read APAT…HPAM, PPQGQQQQPRY, and QQQQQQPQQQQ. Composition is skewed to polar residues over residues 726-742 and 756-765; these read FSGE…SQPT and APQNGNMQAE. Positions 766–788 are enriched in low complexity; it reads SSSNASHSGSTSSQSGQRSGSPP. Over residues 789-798 the composition is skewed to pro residues; the sequence is GAVPPPPPPQ. Composition is skewed to low complexity over residues 822 to 831, 867 to 876, and 902 to 911; these read MMQQQQQHIQ, PMQQNQHPQQ, and QQQQQQQQQQ. The segment covering 912-922 has biased composition (polar residues); it reads MHRQNSLPQQF. The span at 923-935 shows a compositional bias: low complexity; the sequence is QGNQGVNPSGQQS. Residues 948–959 are compositionally biased toward polar residues; sequence TPRDQQHSQSPP.

It belongs to the ataxin-2 family. In terms of assembly, interacts (via C-terminus) with szy-20 (via C-terminus); the interaction is RNA independent. Interacts with pab-1. Interacts with gdi-1. As to expression, expressed in the central nervous system, dorsal and ventral nerve cord, intestinal lining and body-wall muscle. Expressed in the gonad.

Its subcellular location is the cytoplasm. It localises to the nucleus. Functionally, probable RNA-binding protein that negatively regulates the translation of targets. Functions with RNA-binding protein szy-20 to ensure embryonic cell division, and to this end, plays a role in the regulation of centrosome assembly, position and size, and in astral microtubule outgrowth and nucleation. Required for gonad development, germ cell proliferation and for the production of oocytes. Regulates whole body growth and fat accumulation in response to food availability, and this may be through the mTOR pathway, upstream of daf-15 and rheb-1. The sequence is that of Ataxin-2 homolog from Caenorhabditis elegans.